The following is a 383-amino-acid chain: Chorismate synthase (383 aa).

Arg-39 and Arg-45 together coordinate NADP(+). FMN-binding positions include 128 to 130, Gly-291, 306 to 310, and Arg-332; these read RAS and KPIAT.

The protein belongs to the chorismate synthase family. As to quaternary structure, homotetramer. FMNH2 is required as a cofactor.

It catalyses the reaction 5-O-(1-carboxyvinyl)-3-phosphoshikimate = chorismate + phosphate. It functions in the pathway metabolic intermediate biosynthesis; chorismate biosynthesis; chorismate from D-erythrose 4-phosphate and phosphoenolpyruvate: step 7/7. In terms of biological role, catalyzes the anti-1,4-elimination of the C-3 phosphate and the C-6 proR hydrogen from 5-enolpyruvylshikimate-3-phosphate (EPSP) to yield chorismate, which is the branch point compound that serves as the starting substrate for the three terminal pathways of aromatic amino acid biosynthesis. This reaction introduces a second double bond into the aromatic ring system. The chain is Chorismate synthase from Thermus thermophilus (strain ATCC BAA-163 / DSM 7039 / HB27).